Reading from the N-terminus, the 194-residue chain is Leucyl/phenylalanyl-tRNA--protein transferase (194 aa).

This sequence belongs to the L/F-transferase family.

It localises to the cytoplasm. The enzyme catalyses N-terminal L-lysyl-[protein] + L-leucyl-tRNA(Leu) = N-terminal L-leucyl-L-lysyl-[protein] + tRNA(Leu) + H(+). It carries out the reaction N-terminal L-arginyl-[protein] + L-leucyl-tRNA(Leu) = N-terminal L-leucyl-L-arginyl-[protein] + tRNA(Leu) + H(+). The catalysed reaction is L-phenylalanyl-tRNA(Phe) + an N-terminal L-alpha-aminoacyl-[protein] = an N-terminal L-phenylalanyl-L-alpha-aminoacyl-[protein] + tRNA(Phe). Its function is as follows. Functions in the N-end rule pathway of protein degradation where it conjugates Leu, Phe and, less efficiently, Met from aminoacyl-tRNAs to the N-termini of proteins containing an N-terminal arginine or lysine. This Prosthecochloris aestuarii (strain DSM 271 / SK 413) protein is Leucyl/phenylalanyl-tRNA--protein transferase.